The chain runs to 2155 residues: Conidial pigment polyketide synthase PfmaE (2155 aa).

The N-terminal acylcarrier protein transacylase domain (SAT) stretch occupies residues 8-245 (LLFGDQSLDT…TAIPVYGPYH (238 aa)). One can recognise a Ketosynthase family 3 (KS3) domain in the interval 381–813 (KCKLAIVGMA…GGNTGLLLED (433 aa)). Residues Cys553, His688, and His731 each act as for beta-ketoacyl synthase activity in the active site. Positions 910 to 1231 (AFMFTGQGSH…LCTLHSAGLN (322 aa)) are malonyl-CoA:ACP transacylase (MAT) domain. The active-site For acyl/malonyl transferase activity is Ser1001. A product template (PT) domain region spans residues 1293-1608 (TTTVQKVVRE…PRKVLNVVLP (316 aa)). The tract at residues 1297 to 1428 (QKVVREEVKG…CKVFFGDNEE (132 aa)) is N-terminal hotdog fold. Residues 1297-1604 (QKVVREEVKG…FQAIPRKVLN (308 aa)) enclose the PKS/mFAS DH domain. His1329 (proton acceptor; for dehydratase activity) is an active-site residue. Residues 1455–1604 (DASKIGRGLA…FQAIPRKVLN (150 aa)) are C-terminal hotdog fold. Residue Asp1516 is the Proton donor; for dehydratase activity of the active site. Carrier domains are found at residues 1653–1730 (LTKN…AQFE) and 1779–1856 (GNVS…GIED). Ser1690 carries the O-(pantetheine 4'-phosphoryl)serine modification. Positions 1738-1782 (EENAHSSASSDSADMETESNFTTPSDDSEKDEVKGDAPAADGNVS) are disordered. An O-(pantetheine 4'-phosphoryl)serine modification is found at Ser1816. Residues 1855-1892 (EDKPKRAAPKSAKQEPAKPEPKVQGEAKAHTNPVDNYP) form a disordered region. Basic and acidic residues predominate over residues 1866 to 1883 (AKQEPAKPEPKVQGEAKA). The segment at 1911-2041 (QLFMIPDGSG…LGEGDDAEAK (131 aa)) is thioesterase (TE) domain.

Its pathway is pigment biosynthesis; melanin biosynthesis. Functionally, non-reducing polyketide synthase; part of the gene cluster that mediates the biosynthesis of dihydroxynaphthalene (DHN)-melanin, a bluish-green pigment forming a dark layer in the conidial wall that protects the conidia from UV radiations. The first step of the pathway is the production of the pentaketide 1,3,6,8-tetrahydroxynaphthalene (1,3,6,8-THN or T4HN) by the polyketide synthase PfmaE though condensation of acetyl-CoA with malonyl-CoA. T4HN is not stable and easily oxidizes into the stable form flaviolin. T4HN is also substrate of the hydroxynaphthalene reductase PfmaG to yield scytalone. The scytalone dehydratase PfmaJ then reduces scytalone to 1,3,8-THN. 1,3,8-THN is then substrate of the hydroxynaphthalene reductase PfmaI to yield vermelone. Vermelone is further converted by the multicopper oxidase PfmaD to 1,8-DHN. Finally the laccase PFICI_06862 transforms 1,8-DHN to DHN-melanin. The roles of the 5-oxoprolinase PfmaA and the proline iminopeptidase PfmaB within the cluster have not been elucidated yet. This Pestalotiopsis fici (strain W106-1 / CGMCC3.15140) protein is Conidial pigment polyketide synthase PfmaE.